Here is a 1345-residue protein sequence, read N- to C-terminus: DNA-directed RNA polymerase subunit beta (1345 aa).

The protein belongs to the RNA polymerase beta chain family. In terms of assembly, the RNAP catalytic core consists of 2 alpha, 1 beta, 1 beta' and 1 omega subunit. When a sigma factor is associated with the core the holoenzyme is formed, which can initiate transcription.

The enzyme catalyses RNA(n) + a ribonucleoside 5'-triphosphate = RNA(n+1) + diphosphate. DNA-dependent RNA polymerase catalyzes the transcription of DNA into RNA using the four ribonucleoside triphosphates as substrates. The chain is DNA-directed RNA polymerase subunit beta from Shewanella sp. (strain MR-4).